Here is a 142-residue protein sequence, read N- to C-terminus: Large-conductance mechanosensitive channel (142 aa).

Transmembrane regions (helical) follow at residues 14-34 (VMDLAVGVIIGAAFSKIVDSV) and 82-102 (GNFITVFINFLILAWIIFLLI).

This sequence belongs to the MscL family. Homopentamer.

The protein resides in the cell inner membrane. In terms of biological role, channel that opens in response to stretch forces in the membrane lipid bilayer. May participate in the regulation of osmotic pressure changes within the cell. The protein is Large-conductance mechanosensitive channel of Sinorhizobium medicae (strain WSM419) (Ensifer medicae).